We begin with the raw amino-acid sequence, 451 residues long: uncharacterized protein (451 aa).

Residues 2–60 enclose the TRAM domain; the sequence is NLKVKQKIPLKIKRMGINGEGIGFYQKTLVFVPGALKGEDIYCQITSIRRNFVEAKLLK. The [4Fe-4S] cluster site is built by Cys-73, Cys-79, Cys-82, and Cys-162. Residues Gln-283, Tyr-312, Asp-333, and Asp-381 each contribute to the S-adenosyl-L-methionine site. The active-site Nucleophile is Cys-408.

Belongs to the class I-like SAM-binding methyltransferase superfamily. RNA M5U methyltransferase family.

This is an uncharacterized protein from Streptococcus pneumoniae serotype 4 (strain ATCC BAA-334 / TIGR4).